A 230-amino-acid chain; its full sequence is Type II restriction enzyme SinI (230 aa).

It carries out the reaction Endonucleolytic cleavage of DNA to give specific double-stranded fragments with terminal 5'-phosphates.. Functionally, a P subtype restriction enzyme that recognizes the double-stranded sequence 5'-GGWCC-3' and cleaves after G-1. This chain is Type II restriction enzyme SinI (sinIR), found in Salmonella infantis.